Reading from the N-terminus, the 49-residue chain is Disintegrin ocellatin (49 aa).

In terms of domain architecture, Disintegrin spans aspartate 1–glutamate 47. Cystine bridges form between cysteine 2–cysteine 11, cysteine 7–cysteine 32, cysteine 8–cysteine 37, and cysteine 20–cysteine 39. A Cell attachment site motif is present at residues arginine 24–aspartate 26.

Belongs to the venom metalloproteinase (M12B) family. P-II subfamily. P-IIa sub-subfamily. In terms of assembly, monomer. In terms of tissue distribution, expressed by the venom gland.

Its subcellular location is the secreted. In terms of biological role, inhibits ADP-induced human platelet aggregation. The chain is Disintegrin ocellatin from Echis ocellatus (Ocellated saw-scaled viper).